The sequence spans 80 residues: Late cornified envelope protein 6A (80 aa).

Positions 1–10 are enriched in polar residues; the sequence is MSQQKQQSWK. 2 disordered regions span residues 1–21 and 35–60; these read MSQQ…SPPQ and GAPH…ARQK.

Belongs to the LCE family.

Precursors of the cornified envelope of the stratum corneum. This chain is Late cornified envelope protein 6A (LCE6A), found in Homo sapiens (Human).